A 142-amino-acid polypeptide reads, in one-letter code: Ribosome maturation factor RimP (142 aa).

It belongs to the RimP family.

It localises to the cytoplasm. Its function is as follows. Required for maturation of 30S ribosomal subunits. This Nitratiruptor sp. (strain SB155-2) protein is Ribosome maturation factor RimP.